We begin with the raw amino-acid sequence, 102 residues long: snRNA-activating protein complex subunit 5 (102 aa).

Polar residues predominate over residues 73–82; that stretch reads QTTLKLSTRS. The segment at 73-102 is disordered; sequence QTTLKLSTRSPMEEEEEEEEEEEEEEESDS. The span at 85–102 shows a compositional bias: acidic residues; the sequence is EEEEEEEEEEEEEEESDS.

In terms of assembly, part of the SNAPc complex composed of 5 subunits: SNAPC1, SNAPC2, SNAPC3, SNAPC4 and SNAPC5. SNAPC5 interacts with SNAPC4.

It is found in the nucleus. In terms of biological role, part of the SNAPc complex required for the transcription of both RNA polymerase II and III small-nuclear RNA genes. Binds to the proximal sequence element (PSE), a non-TATA-box basal promoter element common to these 2 types of genes. Recruits TBP and BRF2 to the U6 snRNA TATA box. The sequence is that of snRNA-activating protein complex subunit 5 from Mus musculus (Mouse).